Consider the following 329-residue polypeptide: GTPase Obg (329 aa).

Residues 1–159 (MQFIDQARIS…WPLQLELKLL (159 aa)) enclose the Obg domain. In terms of domain architecture, OBG-type G spans 160-328 (AEVGIIGLPN…MLDRVWSELG (169 aa)). Residues 166–173 (GLPNAGKS), 191–195 (FTTLI), 213–216 (DIPG), 280–283 (NKQE), and 309–311 (SAA) each bind ATP. Positions 173 and 193 each coordinate Mg(2+).

Belongs to the TRAFAC class OBG-HflX-like GTPase superfamily. OBG GTPase family. In terms of assembly, monomer. Requires Mg(2+) as cofactor.

The protein localises to the cytoplasm. Its function is as follows. An essential GTPase which binds GTP, GDP and possibly (p)ppGpp with moderate affinity, with high nucleotide exchange rates and a fairly low GTP hydrolysis rate. Plays a role in control of the cell cycle, stress response, ribosome biogenesis and in those bacteria that undergo differentiation, in morphogenesis control. The protein is GTPase Obg of Synechococcus sp. (strain CC9311).